A 266-amino-acid polypeptide reads, in one-letter code: Protein phosphatase 1 regulatory subunit 35 (266 aa).

A compositionally biased stretch (polar residues) spans 1-10; it reads MMVYNGSQLE. The interval 1–118 is disordered; it reads MMVYNGSQLE…QDLGTPVQQS (118 aa). Over residues 21-38 the composition is skewed to pro residues; that stretch reads PGPPPEPRAPEPGAPVPE. A phosphoserine mark is found at Ser-46 and Ser-51. Residues 62–79 show a composition bias toward basic residues; sequence GRRKGRADRRGGARKGRQ. Positions 86–97 are enriched in pro residues; that stretch reads PPSPVRSGPPPA.

It belongs to the PPP1R35 family. In terms of assembly, interacts with PPP1CA; this interaction mediates the PPP1CA phosphatase activity inhibition. Interacts with RTTN; this interaction allows the mutual recruitment to the centriole.

The protein resides in the cytoplasm. It is found in the cytoskeleton. It localises to the microtubule organizing center. Its subcellular location is the centrosome. The protein localises to the centriole. Functionally, during centriole duplication, plays a role in the centriole elongation by promoting the recruitment of the microtubule-binding elongation machinery through its interaction with RTTN, leading to the centriole to centrosome conversion. In addition may play a role in the primary cilia assembly. The protein is Protein phosphatase 1 regulatory subunit 35 of Bos taurus (Bovine).